Reading from the N-terminus, the 132-residue chain is Small ribosomal subunit protein uS8 (132 aa).

This sequence belongs to the universal ribosomal protein uS8 family. Part of the 30S ribosomal subunit. Contacts proteins S5 and S12.

In terms of biological role, one of the primary rRNA binding proteins, it binds directly to 16S rRNA central domain where it helps coordinate assembly of the platform of the 30S subunit. The chain is Small ribosomal subunit protein uS8 from Macrococcus caseolyticus (strain JCSC5402) (Macrococcoides caseolyticum).